Reading from the N-terminus, the 269-residue chain is Prespore protein Dd31 (269 aa).

Over residues 1–17 (MEHNNNPGTPQMSSEFP) the composition is skewed to polar residues. The disordered stretch occupies residues 1 to 35 (MEHNNNPGTPQMSSEFPASTTQTSSSAAAYDNSSH). The span at 18–29 (ASTTQTSSSAAA) shows a compositional bias: low complexity. Helical transmembrane passes span 111–131 (FGIF…VVSI), 139–159 (VDNF…LYFL), 177–197 (YAYL…FVGF), and 225–245 (VSLF…IMYL).

It belongs to the SCAMP family.

The protein resides in the membrane. Its subcellular location is the spore coat. The sequence is that of Prespore protein Dd31 (spiA) from Dictyostelium discoideum (Social amoeba).